The chain runs to 218 residues: Cytochrome b6 (218 aa).

A helical membrane pass occupies residues 35 to 55 (IFYCLGGITLVCFLIQFATGF). Cys-38 contributes to the heme c binding site. 2 residues coordinate heme b: His-89 and His-103. Transmembrane regions (helical) follow at residues 93 to 113 (ASMMVLMLILHVFRVYLTGGF), 119 to 139 (LTWVTGVTMAVITVSFGVTGY), and 189 to 209 (LHTFVMPWLLAVFMLMHFLMI). 2 residues coordinate heme b: His-190 and His-205.

Belongs to the cytochrome b family. PetB subfamily. As to quaternary structure, the 4 large subunits of the cytochrome b6-f complex are cytochrome b6, subunit IV (17 kDa polypeptide, PetD), cytochrome f and the Rieske protein, while the 4 small subunits are PetG, PetL, PetM and PetN. The complex functions as a dimer. Requires heme b as cofactor. Heme c serves as cofactor.

Its subcellular location is the cellular thylakoid membrane. In terms of biological role, component of the cytochrome b6-f complex, which mediates electron transfer between photosystem II (PSII) and photosystem I (PSI), cyclic electron flow around PSI, and state transitions. This Synechococcus sp. (strain CC9311) protein is Cytochrome b6.